A 335-amino-acid polypeptide reads, in one-letter code: Dolichyl-diphosphooligosaccharide--protein glycosyltransferase subunit MAGT1 (335 aa).

A signal peptide spans 1 to 29; sequence MAAGWWFWCVSVTVAVALLIVCDVPSVSA. The Extracellular segment spans residues 30-184; it reads QRKKEMVLSE…DVNIRVIRPP (155 aa). The Thioredoxin domain occupies 47 to 175; sequence WTNKRPVIRM…IARWIADRTD (129 aa). N71 carries an N-linked (GlcNAc...) asparagine glycan. Cysteines 87 and 90 form a disulfide. Residues 185–205 form a helical membrane-spanning segment; it reads NYAGPLMLGLLLAVIGGLVYL. Over 206–209 the chain is Cytoplasmic; it reads RRSN. A helical membrane pass occupies residues 210 to 230; it reads MEFLFNKTGWAFAALCFVLAM. Over 231-270 the chain is Extracellular; sequence TSGQMWNHIRGPPYAHKNPHTGHVNYIHGSSQAQFVAETH. A helical membrane pass occupies residues 271–291; the sequence is IVLLFNGGVTLGMVLLCEAAT. Residues 292 to 300 are Cytoplasmic-facing; the sequence is SDMDIGKRK. The helical transmembrane segment at 301–321 threads the bilayer; it reads IMCVAGIGLVVLFFSWMLSIF. The Extracellular portion of the chain corresponds to 322 to 335; sequence RSKYHGYPYSFLMS.

It belongs to the OST3/OST6 family. As to quaternary structure, accessory component of the STT3B-containing form of the oligosaccharyltransferase (OST) complex. OST exists in two different complex forms which contain common core subunits RPN1, RPN2, OST48, OST4, DAD1 and TMEM258, either STT3A or STT3B as catalytic subunits, and form-specific accessory subunits. OST can form stable complexes with the Sec61 complex or with both the Sec61 and TRAP complexes. The association of TUSC3 or MAGT1 with the STT3B-containing complex seems to be mutually exclusvice.

It is found in the cell membrane. Its subcellular location is the endoplasmic reticulum. It localises to the endoplasmic reticulum membrane. It participates in protein modification; protein glycosylation. Accessory component of the STT3B-containing form of the N-oligosaccharyl transferase (OST) complex which catalyzes the transfer of a high mannose oligosaccharide from a lipid-linked oligosaccharide donor to an asparagine residue within an Asn-X-Ser/Thr consensus motif in nascent polypeptide chains. Involved in N-glycosylation of STT3B-dependent substrates. Specifically required for the glycosylation of a subset of acceptor sites that are near cysteine residues; in this function seems to act redundantly with TUSC3. In its oxidized form proposed to form transient mixed disulfides with a glycoprotein substrate to facilitate access of STT3B to the unmodified acceptor site. Also has oxidoreductase-independent functions in the STT3B-containing OST complex possibly involving substrate recognition. Could indirectly play a role in Mg(2+) transport in epithelial cells. This Pongo abelii (Sumatran orangutan) protein is Dolichyl-diphosphooligosaccharide--protein glycosyltransferase subunit MAGT1.